A 548-amino-acid polypeptide reads, in one-letter code: Chaperonin GroEL (548 aa).

ATP contacts are provided by residues 30–33 (TLGP), Lys-51, 87–91 (DGTTT), Gly-415, 479–481 (NAA), and Asp-495. A disordered region spans residues 526 to 548 (REDKSSDVASSPAGGMGGMGGMM). Over residues 539–548 (GGMGGMGGMM) the composition is skewed to gly residues.

It belongs to the chaperonin (HSP60) family. Forms a cylinder of 14 subunits composed of two heptameric rings stacked back-to-back. Interacts with the co-chaperonin GroES.

The protein resides in the cytoplasm. It carries out the reaction ATP + H2O + a folded polypeptide = ADP + phosphate + an unfolded polypeptide.. Functionally, together with its co-chaperonin GroES, plays an essential role in assisting protein folding. The GroEL-GroES system forms a nano-cage that allows encapsulation of the non-native substrate proteins and provides a physical environment optimized to promote and accelerate protein folding. The protein is Chaperonin GroEL of Buchnera aphidicola subsp. Schizaphis graminum (strain Sg).